Here is a 174-residue protein sequence, read N- to C-terminus: MKPIFIVALLFSTCLVNAKPSINDADIKREPEPNVAVPPCGDCYQQVGNTCVRVPSLCPARKREPEPNVAVPPCGDCYQQVGNTCVRVPSLCPARKREPEPNVAVPPCGDCYQQVGNTCVRVPSLCPARKREPEPNVAVPPCGDCYQQVGNTCVRVPSLCPARKREPENQDLWS.

Positions 1-18 (MKPIFIVALLFSTCLVNA) are cleaved as a signal peptide. The propeptide occupies 19–33 (KPSINDADIKREPEP). Pro39 is subject to Hydroxyproline. Cystine bridges form between Cys40/Cys51 and Cys43/Cys58. The propeptide occupies 61–67 (RKREPEP). The residue at position 73 (Pro73) is a Hydroxyproline. Cystine bridges form between Cys74/Cys85 and Cys77/Cys92. The propeptide occupies 95-101 (RKREPEP). Pro107 bears the Hydroxyproline mark. 2 cysteine pairs are disulfide-bonded: Cys108-Cys119 and Cys111-Cys126. Residues 129-135 (RKREPEP) constitute a propeptide that is removed on maturation. Residue Pro141 is modified to Hydroxyproline. 2 disulfide bridges follow: Cys142-Cys153 and Cys145-Cys160. Positions 163–174 (RKREPENQDLWS) are excised as a propeptide.

The protein belongs to the sea anemone BBH family.

Its subcellular location is the secreted. The protein resides in the nematocyst. Neurotoxin that paralyzes freshwater crabs at high concentration. This chain is U-stichotoxin-Hau2a, found in Heteractis aurora (Banded sea anemone).